The sequence spans 292 residues: 11-beta-hydroxysteroid dehydrogenase 1 (292 aa).

The Cytoplasmic portion of the chain corresponds to 2-7 (AFMKKY). A helical; Signal-anchor for type II membrane protein transmembrane segment spans residues 8–24 (LLPLLGLFLAYYYYSAN). The Lumenal portion of the chain corresponds to 25 to 292 (EEFRPEMLQG…KFDISKLVNN (268 aa)). NADP(+) is bound by residues 41–67 (GASK…TARS), 92–93 (TM), and 119–121 (NHI). 2 N-linked (GlcNAc...) asparagine glycosylation sites follow: asparagine 123 and asparagine 162. Serine 170 serves as a coordination point for substrate. Tyrosine 183 serves as the catalytic Proton acceptor. An NADP(+)-binding site is contributed by 183–187 (YSASK). N-linked (GlcNAc...) asparagine glycosylation is present at asparagine 207. 218-222 (IDTDT) provides a ligand contact to NADP(+).

The protein belongs to the short-chain dehydrogenases/reductases (SDR) family. As to quaternary structure, homodimer. Glycosylated. Expressed in the eye.

The protein resides in the endoplasmic reticulum membrane. The protein localises to the microsome membrane. The enzyme catalyses an 11beta-hydroxysteroid + NADP(+) = an 11-oxosteroid + NADPH + H(+). It catalyses the reaction corticosterone + NADP(+) = 11-dehydrocorticosterone + NADPH + H(+). The catalysed reaction is cortisone + NADPH + H(+) = cortisol + NADP(+). It carries out the reaction a 7beta-hydroxysteroid + NADP(+) = a 7-oxosteroid + NADPH + H(+). The enzyme catalyses 7-oxocholesterol + NADPH + H(+) = 7beta-hydroxycholesterol + NADP(+). It catalyses the reaction chenodeoxycholate + NADP(+) = 7-oxolithocholate + NADPH + H(+). The catalysed reaction is 7-oxolithocholate + NADPH + H(+) = ursodeoxycholate + NADP(+). It carries out the reaction glycochenodeoxycholate + NADP(+) = 7-oxoglycolithocholate + NADPH + H(+). The enzyme catalyses taurochenodeoxycholate + NADP(+) = 7-oxotaurolithocholate + NADPH + H(+). It catalyses the reaction tauroursodeoxycholate + NADP(+) = 7-oxotaurolithocholate + NADPH + H(+). The catalysed reaction is glycoursodeoxycholate + NADP(+) = 7-oxoglycolithocholate + NADPH + H(+). It carries out the reaction 7-oxopregnenolone + NADPH + H(+) = 7beta-hydroxypregnenolone + NADP(+). The enzyme catalyses 3beta,7alpha-dihydroxyandrost-5-en-17-one + NADP(+) = 3beta-hydroxy-5-androstene-7,17-dione + NADPH + H(+). It catalyses the reaction 3beta-hydroxy-5-androstene-7,17-dione + NADPH + H(+) = 3beta,7beta-dihydroxyandrost-5-en-17-one + NADP(+). The catalysed reaction is 3beta-hydroxy-5alpha-androstane-7,17-dione + NADPH + H(+) = 3beta,7beta-dihydroxy-5alpha-androstan-17-one + NADP(+). It participates in steroid metabolism. Its function is as follows. Controls the reversible conversion of biologically active glucocorticoids such as cortisone to cortisol, and 11-dehydrocorticosterone to corticosterone in the presence of NADP(H). Participates in the corticosteroid receptor-mediated anti-inflammatory response, as well as metabolic and homeostatic processes. Plays a role in the secretion of aqueous humor in the eye, maintaining a normotensive, intraocular environment. Bidirectional in vitro, predominantly functions as a reductase in vivo, thereby increasing the concentration of active glucocorticoids. It has broad substrate specificity, besides glucocorticoids, it accepts other steroid and sterol substrates. It has broad substrate specificity, besides glucocorticoids, it accepts other steroid and sterol substrates. Interconverts 7-oxo- and 7-hydroxy-neurosteroids such as 7-oxopregnenolone and 7beta-hydroxypregnenolone, 7-oxodehydroepiandrosterone (3beta-hydroxy-5-androstene-7,17-dione) and 7beta-hydroxydehydroepiandrosterone (3beta,7beta-dihydroxyandrost-5-en-17-one), among others. Catalyzes the stereo-specific conversion of the major dietary oxysterol, 7-ketocholesterol (7-oxocholesterol), into the more polar 7-beta-hydroxycholesterol metabolite. 7-oxocholesterol is one of the most important oxysterols, it participates in several events such as induction of apoptosis, accumulation in atherosclerotic lesions, lipid peroxidation, and induction of foam cell formation. Mediates the 7-oxo reduction of 7-oxolithocholate mainly to chenodeoxycholate, and to a lesser extent to ursodeoxycholate, both in its free form and when conjugated to glycine or taurine, providing a link between glucocorticoid activation and bile acid metabolism. Catalyzes the synthesis of 7-beta-25-dihydroxycholesterol from 7-oxo-25-hydroxycholesterol in vitro, which acts as a ligand for the G-protein-coupled receptor (GPCR) Epstein-Barr virus-induced gene 2 (EBI2) and may thereby regulate immune cell migration. This Oryctolagus cuniculus (Rabbit) protein is 11-beta-hydroxysteroid dehydrogenase 1.